We begin with the raw amino-acid sequence, 110 residues long: Ubiquitin-related modifier 1 (110 aa).

Residue Gly110 is modified to 1-thioglycine. A Glycyl lysine isopeptide (Gly-Lys) (interchain with K-? in acceptor proteins) cross-link involves residue Gly110.

The protein belongs to the URM1 family. As to quaternary structure, homodimer; homodimerization may provide an autoprotection to the highly active C-terminal residue before attacking its substrates. Forms a conjugate with the target protein AHP1. In terms of processing, C-terminal thiocarboxylation occurs in 2 steps, it is first acyl-adenylated (-COAMP) via the hesA/moeB/thiF part of UBA4, then thiocarboxylated (-COSH) via the rhodanese domain of UBA4.

The protein resides in the cytoplasm. Its pathway is tRNA modification; 5-methoxycarbonylmethyl-2-thiouridine-tRNA biosynthesis. In terms of biological role, acts as a sulfur carrier required for 2-thiolation of mcm(5)S(2)U at tRNA wobble positions of cytosolic tRNA(Lys), tRNA(Glu) and tRNA(Gln). Serves as sulfur donor in tRNA 2-thiolation reaction by being thiocarboxylated (-COSH) at its C-terminus by the MOCS3 homolog UBA4. The sulfur is then transferred to tRNA to form 2-thiolation of mcm(5)S(2)U. Prior mcm(5) tRNA modification by the elongator complex is required for 2-thiolation. Also acts as a ubiquitin-like protein (UBL) that is covalently conjugated via an isopeptide bond to lysine residues of target proteins such as AHP1. Conjugation does not depend on the canonical cascade of E2 ubiquitin-conjugating enzymes and/or E3 ligases. The conjugation reaction requires a thiocarboxylated C-terminus of URM1 and a peroxidatic cysteine in the target protein, as the sulfur atom of the URM1 thiocarboxyl group is transferred to redox-active cysteine residues in the target protein. Oxidative stress specifically induces the formation of UBL-protein conjugates. Covalent modification with URM1 promotes the phase separation of a wide range of proteins into condensates like stress granules. The polypeptide is Ubiquitin-related modifier 1 (Chaetomium thermophilum (strain DSM 1495 / CBS 144.50 / IMI 039719) (Thermochaetoides thermophila)).